Reading from the N-terminus, the 203-residue chain is MSKIISLVVAMIAVLALPIRGQQQPLSQCTPSMMTTVSPCMGFITNSSSNGTSPSSDCCNSLRSLTTGGMGCLCLIVTGTVPFNIPINRTTAVSLPRACNMPRVPLQCQANIAPAAAPGPAATFGPSMSPGPETDPIVPEPTPAAQTPQSDTTRPFTPSVDGGAPTSDDGGSTSRPSETPSSAYALSPSLLFFSIALVALKFY.

An N-terminal signal peptide occupies residues 1–21 (MSKIISLVVAMIAVLALPIRG). Disulfide bonds link cysteine 29–cysteine 74, cysteine 40–cysteine 58, cysteine 59–cysteine 99, and cysteine 72–cysteine 108. N-linked (GlcNAc...) asparagine glycosylation is found at asparagine 46, asparagine 50, and asparagine 88. Residues 119–182 (GPAATFGPSM…TSRPSETPSS (64 aa)) are disordered. 2 stretches are compositionally biased toward polar residues: residues 144–156 (AAQT…TRPF) and 169–179 (DGGSTSRPSET). Serine 172 is lipidated: GPI-anchor amidated serine. A propeptide spans 173-203 (TSRPSETPSSAYALSPSLLFFSIALVALKFY) (removed in mature form).

This sequence belongs to the plant LTP family. In terms of tissue distribution, expressed in seedlings, preferentially in hypocotyls and roots. Also observed in siliques and sepals.

The protein resides in the cell membrane. In terms of biological role, probable lipid transfer protein. This is Non-specific lipid transfer protein GPI-anchored 20 from Arabidopsis thaliana (Mouse-ear cress).